A 336-amino-acid polypeptide reads, in one-letter code: N-acetyl-gamma-glutamyl-phosphate reductase (336 aa).

Residue Cys-156 is part of the active site.

It belongs to the NAGSA dehydrogenase family. Type 1 subfamily.

It is found in the cytoplasm. The enzyme catalyses N-acetyl-L-glutamate 5-semialdehyde + phosphate + NADP(+) = N-acetyl-L-glutamyl 5-phosphate + NADPH + H(+). It functions in the pathway amino-acid biosynthesis; L-arginine biosynthesis; N(2)-acetyl-L-ornithine from L-glutamate: step 3/4. In terms of biological role, catalyzes the NADPH-dependent reduction of N-acetyl-5-glutamyl phosphate to yield N-acetyl-L-glutamate 5-semialdehyde. The sequence is that of N-acetyl-gamma-glutamyl-phosphate reductase from Moritella profunda.